Consider the following 469-residue polypeptide: Aspartyl/glutamyl-tRNA(Asn/Gln) amidotransferase subunit B (469 aa).

It belongs to the GatB/GatE family. GatB subfamily. In terms of assembly, heterotrimer of A, B and C subunits.

The enzyme catalyses L-glutamyl-tRNA(Gln) + L-glutamine + ATP + H2O = L-glutaminyl-tRNA(Gln) + L-glutamate + ADP + phosphate + H(+). It catalyses the reaction L-aspartyl-tRNA(Asn) + L-glutamine + ATP + H2O = L-asparaginyl-tRNA(Asn) + L-glutamate + ADP + phosphate + 2 H(+). Allows the formation of correctly charged Asn-tRNA(Asn) or Gln-tRNA(Gln) through the transamidation of misacylated Asp-tRNA(Asn) or Glu-tRNA(Gln) in organisms which lack either or both of asparaginyl-tRNA or glutaminyl-tRNA synthetases. The reaction takes place in the presence of glutamine and ATP through an activated phospho-Asp-tRNA(Asn) or phospho-Glu-tRNA(Gln). In Methanococcus aeolicus (strain ATCC BAA-1280 / DSM 17508 / OCM 812 / Nankai-3), this protein is Aspartyl/glutamyl-tRNA(Asn/Gln) amidotransferase subunit B.